We begin with the raw amino-acid sequence, 197 residues long: Beta-crystallin A2 (197 aa).

The N-terminal arm stretch occupies residues Met1–Pro11. 2 Beta/gamma crystallin 'Greek key' domains span residues Ala12 to Asn52 and Gly53 to Leu99. The tract at residues Cys100–Asp105 is connecting peptide. Beta/gamma crystallin 'Greek key' domains are found at residues Ser106–Ser147 and Gly148–Gln196.

Belongs to the beta/gamma-crystallin family. Homo/heterodimer, or complexes of higher-order. The structure of beta-crystallin oligomers seems to be stabilized through interactions between the N-terminal arms.

Crystallins are the dominant structural components of the vertebrate eye lens. This Bos taurus (Bovine) protein is Beta-crystallin A2 (CRYBA2).